We begin with the raw amino-acid sequence, 431 residues long: MANSC domain-containing protein 1 (431 aa).

Positions 1 to 26 are cleaved as a signal peptide; it reads MFFGGEGSLTYTLVIICFLTLRLSAS. At 27–385 the chain is on the extracellular side; that stretch reads QNCLKKSLED…QYGLPFEKWL (359 aa). Positions 33-117 constitute an MANSC domain; sequence SLEDVVIDIQ…LKPAKGLMSY (85 aa). Residues N72, N222, and N251 are each glycosylated (N-linked (GlcNAc...) asparagine). Residues 234 to 277 are disordered; sequence SPHTTSATPKPATLLPTNASVTPSGTSQPQLATTAPPVTTVTSQ. Polar residues predominate over residues 248–261; sequence LPTNASVTPSGTSQ. Low complexity predominate over residues 262–277; the sequence is PQLATTAPPVTTVTSQ. N327 and N352 each carry an N-linked (GlcNAc...) asparagine glycan. Residues 352-372 form a disordered region; that stretch reads NKTASWEGREASPGSSSQGSV. A helical transmembrane segment spans residues 386 to 408; the sequence is LIGSLLFGVLFLVIGLVLLGRIL. The Cytoplasmic portion of the chain corresponds to 409 to 431; the sequence is SESLRRKRYSRLDYLINGIYVDI.

In terms of tissue distribution, widely expressed.

The protein resides in the membrane. The chain is MANSC domain-containing protein 1 (MANSC1) from Homo sapiens (Human).